Reading from the N-terminus, the 143-residue chain is UPF0225 protein Reut_A0143 (143 aa).

It belongs to the UPF0225 family.

The sequence is that of UPF0225 protein Reut_A0143 from Cupriavidus pinatubonensis (strain JMP 134 / LMG 1197) (Cupriavidus necator (strain JMP 134)).